Consider the following 189-residue polypeptide: Apolipoprotein D (189 aa).

The first 21 residues, 1 to 21, serve as a signal peptide directing secretion; that stretch reads MAPTLLLLLPALAGLISVAQG. Gln22 carries the pyrrolidone carboxylic acid modification. 2 disulfides stabilise this stretch: Cys29/Cys135 and Cys62/Cys186. N-linked (GlcNAc...) asparagine glycans are attached at residues Asn66 and Asn99.

The protein belongs to the calycin superfamily. Lipocalin family. Homodimer. Most heavily expressed in adrenal gland, lung, brain, testis and spleen.

The protein localises to the secreted. Functionally, APOD occurs in the macromolecular complex with lecithin-transport and binding of bilin. Appears to be able to transport a variety of ligands in a number of different contexts. The sequence is that of Apolipoprotein D (APOD) from Oryctolagus cuniculus (Rabbit).